The following is a 199-amino-acid chain: Recombination protein RecR (199 aa).

The C4-type zinc finger occupies 58 to 73 (CQTCHHLSAEPTCEIC). The region spanning 81-175 (GQICVVADSR…RVSRIAYGLP (95 aa)) is the Toprim domain.

This sequence belongs to the RecR family.

Its function is as follows. May play a role in DNA repair. It seems to be involved in an RecBC-independent recombinational process of DNA repair. It may act with RecF and RecO. This chain is Recombination protein RecR, found in Synechococcus sp. (strain WH7803).